The primary structure comprises 354 residues: Galectin-9 (354 aa).

Galectin domains follow at residues 17–147 and 226–354; these read FTGI…INFQ and FFTS…HVQT. Residues Asn47, His60, Arg64, Asn74, 81 to 87, His266, Arg270, Thr280, and 286 to 292 each bind a beta-D-galactoside; these read WGPEERK and WGPEERS.

In terms of tissue distribution, the isoform Long is expressed exclusively in the small intestine.

It localises to the cytoplasm. It is found in the nucleus. The protein resides in the secreted. Its function is as follows. Binds galactosides. Has high affinity for the Forssman pentasaccharide. Ligand for HAVCR2/TIM3. Binding to HAVCR2 induces T-helper type 1 lymphocyte (Th1) death. Also stimulates bactericidal activity in infected macrophages by causing macrophage activation and IL1B secretion which restricts intracellular bacterial growth. Ligand for P4HB; the interaction retains P4HB at the cell surface of Th2 T helper cells, increasing disulfide reductase activity at the plasma membrane, altering the plasma membrane redox state and enhancing cell migration. Ligand for CD44; the interaction enhances binding of SMAD3 to the FOXP3 promoter, leading to up-regulation of FOXP3 expression and increased induced regulatory T (iTreg) cell stability and suppressive function. Promotes ability of mesenchymal stromal cells to suppress T-cell proliferation. Expands regulatory T-cells and induces cytotoxic T-cell apoptosis following virus infection. Activates ERK1/2 phosphorylation inducing cytokine (IL-6, IL-8, IL-12) and chemokine (CCL2) production in mast and dendritic cells. Inhibits degranulation and induces apoptosis of mast cells. Induces maturation and migration of dendritic cells. Inhibits natural killer (NK) cell function. Can transform NK cell phenotype from peripheral to decidual during pregnancy. Astrocyte derived galectin-9 enhances microglial TNF production. May play a role in thymocyte-epithelial interactions relevant to the biology of the thymus. May provide the molecular basis for urate flux across cell membranes, allowing urate that is formed during purine metabolism to efflux from cells and serving as an electrogenic transporter that plays an important role in renal and gastrointestinal urate excretion. Highly selective to the anion urate. In Rattus norvegicus (Rat), this protein is Galectin-9 (Lgals9).